The chain runs to 135 residues: MLSPKRTKFRKQHRNRMNGKASKGNTIAFGEYALQTLEPVWLTARQIEATRRTITRYVKRGGKIWIRVFPDKPITARPAETRMGSGKGATEYWVAVIKPGHILFEIAGVSKQTAQEAMKLASYKLPIKTKFITKQ.

A compositionally biased stretch (basic residues) spans M1 to M17. Residues M1 to S22 are disordered.

This sequence belongs to the universal ribosomal protein uL16 family. Part of the 50S ribosomal subunit.

It is found in the plastid. The protein resides in the chloroplast. The chain is Large ribosomal subunit protein uL16c from Gracilaria tenuistipitata (Red alga).